The sequence spans 88 residues: Small ribosomal subunit protein uS15 (88 aa).

The protein belongs to the universal ribosomal protein uS15 family. As to quaternary structure, part of the 30S ribosomal subunit. Forms a bridge to the 50S subunit in the 70S ribosome, contacting the 23S rRNA.

In terms of biological role, one of the primary rRNA binding proteins, it binds directly to 16S rRNA where it helps nucleate assembly of the platform of the 30S subunit by binding and bridging several RNA helices of the 16S rRNA. Forms an intersubunit bridge (bridge B4) with the 23S rRNA of the 50S subunit in the ribosome. The polypeptide is Small ribosomal subunit protein uS15 (Mesomycoplasma flocculare (Mycoplasma flocculare)).